The following is a 291-amino-acid chain: 4-hydroxy-tetrahydrodipicolinate synthase (291 aa).

Threonine 44 is a binding site for pyruvate. The active-site Proton donor/acceptor is tyrosine 132. The Schiff-base intermediate with substrate role is filled by lysine 160. Residue isoleucine 202 coordinates pyruvate.

Belongs to the DapA family. In terms of assembly, homotetramer; dimer of dimers.

Its subcellular location is the cytoplasm. The enzyme catalyses L-aspartate 4-semialdehyde + pyruvate = (2S,4S)-4-hydroxy-2,3,4,5-tetrahydrodipicolinate + H2O + H(+). It participates in amino-acid biosynthesis; L-lysine biosynthesis via DAP pathway; (S)-tetrahydrodipicolinate from L-aspartate: step 3/4. In terms of biological role, catalyzes the condensation of (S)-aspartate-beta-semialdehyde [(S)-ASA] and pyruvate to 4-hydroxy-tetrahydrodipicolinate (HTPA). In Parvibaculum lavamentivorans (strain DS-1 / DSM 13023 / NCIMB 13966), this protein is 4-hydroxy-tetrahydrodipicolinate synthase.